We begin with the raw amino-acid sequence, 338 residues long: Ketol-acid reductoisomerase (NADP(+)) (338 aa).

In terms of domain architecture, KARI N-terminal Rossmann spans 1–181 (MNVYYDRDCD…GGGRTGIIET (181 aa)). NADP(+)-binding positions include 24–27 (YGSQ), arginine 47, serine 50, serine 52, and 82–85 (DEFQ). The active site involves histidine 107. Glycine 133 contacts NADP(+). One can recognise a KARI C-terminal knotted domain in the interval 182 to 327 (TFKDETETDL…GNLRAMMPWI (146 aa)). Positions 190, 194, 226, and 230 each coordinate Mg(2+). Serine 251 is a substrate binding site.

Belongs to the ketol-acid reductoisomerase family. Mg(2+) is required as a cofactor.

The enzyme catalyses (2R)-2,3-dihydroxy-3-methylbutanoate + NADP(+) = (2S)-2-acetolactate + NADPH + H(+). It catalyses the reaction (2R,3R)-2,3-dihydroxy-3-methylpentanoate + NADP(+) = (S)-2-ethyl-2-hydroxy-3-oxobutanoate + NADPH + H(+). The protein operates within amino-acid biosynthesis; L-isoleucine biosynthesis; L-isoleucine from 2-oxobutanoate: step 2/4. It functions in the pathway amino-acid biosynthesis; L-valine biosynthesis; L-valine from pyruvate: step 2/4. Involved in the biosynthesis of branched-chain amino acids (BCAA). Catalyzes an alkyl-migration followed by a ketol-acid reduction of (S)-2-acetolactate (S2AL) to yield (R)-2,3-dihydroxy-isovalerate. In the isomerase reaction, S2AL is rearranged via a Mg-dependent methyl migration to produce 3-hydroxy-3-methyl-2-ketobutyrate (HMKB). In the reductase reaction, this 2-ketoacid undergoes a metal-dependent reduction by NADPH to yield (R)-2,3-dihydroxy-isovalerate. This chain is Ketol-acid reductoisomerase (NADP(+)), found in Trichlorobacter lovleyi (strain ATCC BAA-1151 / DSM 17278 / SZ) (Geobacter lovleyi).